The chain runs to 354 residues: Glucose 1-dehydrogenase (354 aa).

A disordered region spans residues 1–27 (MKVIGVTRDDDGPQLLERERPSPDPGE). Over residues 7-22 (TRDDDGPQLLERERPS) the composition is skewed to basic and acidic residues. Residue Asp38 participates in Zn(2+) binding. Thr40 is a substrate binding site. Zn(2+) contacts are provided by His63 and Glu64. Positions 91–110 (PNGETNEYFRRGEPDMAPDG) are disordered. Substrate contacts are provided by Glu114 and Glu150. Residue Glu150 coordinates Zn(2+). NADP(+)-binding positions include 181-184 (NGSL), 204-205 (RR), 269-271 (LGI), and 298-300 (TVN). Position 300 (Asn300) interacts with substrate.

This sequence belongs to the zinc-containing alcohol dehydrogenase family. Glucose 1-dehydrogenase subfamily. It depends on Zn(2+) as a cofactor.

It catalyses the reaction D-glucose + NAD(+) = D-glucono-1,5-lactone + NADH + H(+). The catalysed reaction is D-glucose + NADP(+) = D-glucono-1,5-lactone + NADPH + H(+). Functionally, catalyzes the NAD(P)(+)-dependent oxidation of D-glucose to D-gluconate via gluconolactone. Can utilize both NAD(+) and NADP(+) as electron acceptor. Is involved in the degradation of glucose through a modified Entner-Doudoroff pathway. In Haloarcula marismortui (strain ATCC 43049 / DSM 3752 / JCM 8966 / VKM B-1809) (Halobacterium marismortui), this protein is Glucose 1-dehydrogenase.